The following is a 206-amino-acid chain: Ribosomal RNA large subunit methyltransferase E (206 aa).

S-adenosyl-L-methionine contacts are provided by glycine 60, tryptophan 62, aspartate 80, aspartate 96, and aspartate 121. Catalysis depends on lysine 161, which acts as the Proton acceptor.

The protein belongs to the class I-like SAM-binding methyltransferase superfamily. RNA methyltransferase RlmE family.

It localises to the cytoplasm. The catalysed reaction is uridine(2552) in 23S rRNA + S-adenosyl-L-methionine = 2'-O-methyluridine(2552) in 23S rRNA + S-adenosyl-L-homocysteine + H(+). Its function is as follows. Specifically methylates the uridine in position 2552 of 23S rRNA at the 2'-O position of the ribose in the fully assembled 50S ribosomal subunit. The polypeptide is Ribosomal RNA large subunit methyltransferase E (Hahella chejuensis (strain KCTC 2396)).